Consider the following 1086-residue polypeptide: Fused isobutyryl-CoA mutase (1086 aa).

A B12-binding domain is found at 10–140; it reads HVRFVTASSL…QGMINVMLEE (131 aa). Residue histidine 23 participates in adenosylcob(III)alamin binding. The GTPase chaperone MeaI stretch occupies residues 153–407; the sequence is LERLPSGDVQ…FVALVDTINK (255 aa). A GTP-binding site is contributed by 210–215; the sequence is GAGKSS. Residues serine 214, valine 238, aspartate 239, and aspartate 252 each contribute to the Mg(2+) site. A GTP-binding site is contributed by arginine 255. Mg(2+) contacts are provided by glutamate 300 and threonine 301. GTP is bound at residue 347 to 350; the sequence is NKFE. Residues 408 to 570 form a linker region; it reads KAGTNWKTSL…YKENVPGSFP (163 aa). Substrate is bound by residues phenylalanine 578, arginine 613, arginine 719, tyrosine 763, serine 812, arginine 847, and lysine 852. GTP-binding residues include glutamate 964 and asparagine 1085.

The protein belongs to the IcmF family. In terms of assembly, homodimer. It depends on adenosylcob(III)alamin as a cofactor. The cofactor is Mg(2+).

The enzyme catalyses 2-methylpropanoyl-CoA = butanoyl-CoA. It catalyses the reaction 3-methylbutanoyl-CoA = 2,2-dimethylpropanoyl-CoA. It carries out the reaction GTP + H2O = GDP + phosphate + H(+). Functionally, catalyzes the reversible interconversion of isobutyryl-CoA and n-butyryl-CoA, and to a lesser extent, of pivalyl-CoA and isovaleryl-CoA, using radical chemistry. Also exhibits GTPase activity, associated with its G-protein domain (MeaI) that functions as a chaperone that assists cofactor delivery and proper holo-enzyme assembly. Also displays ATPase activity. Is not able to convert 3-hydroxybutyryl-CoA to 2-hydroxyisobutyryl-CoA. Does not exhibit methylmalonyl-CoA mutase (MCM) activity. The sequence is that of Fused isobutyryl-CoA mutase from Geobacillus kaustophilus (strain HTA426).